A 328-amino-acid polypeptide reads, in one-letter code: Tetraacyldisaccharide 4'-kinase (328 aa).

Thr55 to Thr62 is an ATP binding site.

Belongs to the LpxK family.

The enzyme catalyses a lipid A disaccharide + ATP = a lipid IVA + ADP + H(+). It functions in the pathway glycolipid biosynthesis; lipid IV(A) biosynthesis; lipid IV(A) from (3R)-3-hydroxytetradecanoyl-[acyl-carrier-protein] and UDP-N-acetyl-alpha-D-glucosamine: step 6/6. Its function is as follows. Transfers the gamma-phosphate of ATP to the 4'-position of a tetraacyldisaccharide 1-phosphate intermediate (termed DS-1-P) to form tetraacyldisaccharide 1,4'-bis-phosphate (lipid IVA). The polypeptide is Tetraacyldisaccharide 4'-kinase (Escherichia coli O139:H28 (strain E24377A / ETEC)).